The following is a 444-amino-acid chain: Methylenetetrahydrofolate--tRNA-(uracil-5-)-methyltransferase TrmFO (444 aa).

10-15 (GAGLAG) contributes to the FAD binding site.

The protein belongs to the MnmG family. TrmFO subfamily. It depends on FAD as a cofactor.

Its subcellular location is the cytoplasm. The enzyme catalyses uridine(54) in tRNA + (6R)-5,10-methylene-5,6,7,8-tetrahydrofolate + NADH + H(+) = 5-methyluridine(54) in tRNA + (6S)-5,6,7,8-tetrahydrofolate + NAD(+). The catalysed reaction is uridine(54) in tRNA + (6R)-5,10-methylene-5,6,7,8-tetrahydrofolate + NADPH + H(+) = 5-methyluridine(54) in tRNA + (6S)-5,6,7,8-tetrahydrofolate + NADP(+). Functionally, catalyzes the folate-dependent formation of 5-methyl-uridine at position 54 (M-5-U54) in all tRNAs. This is Methylenetetrahydrofolate--tRNA-(uracil-5-)-methyltransferase TrmFO from Streptococcus pneumoniae serotype 2 (strain D39 / NCTC 7466).